The sequence spans 257 residues: Imidazole glycerol phosphate synthase subunit HisF (257 aa).

Active-site residues include D11 and D130.

The protein belongs to the HisA/HisF family. Heterodimer of HisH and HisF.

The protein localises to the cytoplasm. The enzyme catalyses 5-[(5-phospho-1-deoxy-D-ribulos-1-ylimino)methylamino]-1-(5-phospho-beta-D-ribosyl)imidazole-4-carboxamide + L-glutamine = D-erythro-1-(imidazol-4-yl)glycerol 3-phosphate + 5-amino-1-(5-phospho-beta-D-ribosyl)imidazole-4-carboxamide + L-glutamate + H(+). It participates in amino-acid biosynthesis; L-histidine biosynthesis; L-histidine from 5-phospho-alpha-D-ribose 1-diphosphate: step 5/9. In terms of biological role, IGPS catalyzes the conversion of PRFAR and glutamine to IGP, AICAR and glutamate. The HisF subunit catalyzes the cyclization activity that produces IGP and AICAR from PRFAR using the ammonia provided by the HisH subunit. This chain is Imidazole glycerol phosphate synthase subunit HisF, found in Shewanella baltica (strain OS155 / ATCC BAA-1091).